A 353-amino-acid polypeptide reads, in one-letter code: Inositol-tetrakisphosphate 1-kinase 3 (353 aa).

The disordered stretch occupies residues M1–S25. Residues K50 and K92 each contribute to the 1D-myo-inositol 1,3,4-trisphosphate site. ATP is bound by residues R127 and K177. The ATP-grasp domain maps to N138–A350. H188 and K220 together coordinate 1D-myo-inositol 1,3,4-trisphosphate. ATP contacts are provided by residues Q209–K220 and S235. Residues D300, D315, and N317 each contribute to the Mg(2+) site. Position 317 (N317) interacts with 1D-myo-inositol 1,3,4-trisphosphate.

This sequence belongs to the ITPK1 family. Monomer. Mg(2+) is required as a cofactor. In terms of tissue distribution, highly expressed in leaves and flowers, and at lower levels in roots, stems, cauline leaves and siliques.

It carries out the reaction 1D-myo-inositol 3,4,5,6-tetrakisphosphate + ATP = 1D-myo-inositol 1,3,4,5,6-pentakisphosphate + ADP + H(+). It catalyses the reaction 1D-myo-inositol 1,3,4-trisphosphate + ATP = 1D-myo-inositol 1,3,4,5-tetrakisphosphate + ADP + H(+). The catalysed reaction is 1D-myo-inositol 1,3,4-trisphosphate + ATP = 1D-myo-inositol 1,3,4,6-tetrakisphosphate + ADP + H(+). Functionally, kinase that can phosphorylate various inositol polyphosphate such as Ins(3,4,5,6)P4 or Ins(1,3,4)P3. Phosphorylates Ins(3,4,5,6)P4 to form InsP5. This reaction is thought to have regulatory importance, since Ins(3,4,5,6)P4 is an inhibitor of plasma membrane Ca(2+)-activated Cl(-) channels, while Ins(1,3,4,5,6)P5 is not. Also phosphorylates Ins(1,3,4)P3 or a racemic mixture of Ins(1,4,6)P3 and Ins(3,4,6)P3 to form InsP4. Ins(1,3,4,6)P4 is an essential molecule in the hexakisphosphate (InsP6) pathway. This Arabidopsis thaliana (Mouse-ear cress) protein is Inositol-tetrakisphosphate 1-kinase 3 (ITPK3).